We begin with the raw amino-acid sequence, 166 residues long: Short form salivary protein D7R5 (166 aa).

The first 22 residues, 1–22 (MEWRYFVVIALICPLIIVETLA), serve as a signal peptide directing secretion. Intrachain disulfides connect Cys26–Cys58, Cys39–Cys166, and Cys98–Cys117.

This sequence belongs to the PBP/GOBP family.

The protein resides in the secreted. In terms of biological role, in contrast to the related D7 salivary proteins, does not bind biogenic amines such as serotonin, noradrenaline, histamine and adrenaline. It is hypothesized that either D7r5 evolved an as yet unknown function or is becoming a pseudogene. This is Short form salivary protein D7R5 from Anopheles gambiae (African malaria mosquito).